Consider the following 539-residue polypeptide: GMP synthase [glutamine-hydrolyzing] (539 aa).

The region spanning 4-202 is the Glutamine amidotransferase type-1 domain; sequence KILILDFGSQ…VLGICRAKAD (199 aa). The Nucleophile role is filled by Cys-81. Catalysis depends on residues His-176 and Glu-178. The GMPS ATP-PPase domain maps to 203–395; the sequence is WVMKDHIEEA…LGLPPEMVYR (193 aa). ATP is bound at residue 230–236; it reads SGGVDSS.

As to quaternary structure, homodimer.

The enzyme catalyses XMP + L-glutamine + ATP + H2O = GMP + L-glutamate + AMP + diphosphate + 2 H(+). Its pathway is purine metabolism; GMP biosynthesis; GMP from XMP (L-Gln route): step 1/1. Catalyzes the synthesis of GMP from XMP. In Cupriavidus pinatubonensis (strain JMP 134 / LMG 1197) (Cupriavidus necator (strain JMP 134)), this protein is GMP synthase [glutamine-hydrolyzing].